Consider the following 217-residue polypeptide: Probable GTP-binding protein EngB (217 aa).

The 175-residue stretch at Gly27 to Ala201 folds into the EngB-type G domain. GTP-binding positions include Gly35–Ser42, Gly62–Leu66, Asp80–Gly83, Thr147–Asp150, and Phe180–Ser182. The Mg(2+) site is built by Ser42 and Thr64.

It belongs to the TRAFAC class TrmE-Era-EngA-EngB-Septin-like GTPase superfamily. EngB GTPase family. Mg(2+) is required as a cofactor.

In terms of biological role, necessary for normal cell division and for the maintenance of normal septation. This is Probable GTP-binding protein EngB from Aeromonas salmonicida (strain A449).